Consider the following 910-residue polypeptide: Translation factor GUF1 homolog, mitochondrial (910 aa).

The tract at residues 126–188 is disordered; that stretch reads RRGNGLPFER…DGGGAPEHPQ (63 aa). The region spanning 189–366 is the tr-type G domain; it reads QNVRNFCILA…RIVSDIPCPA (178 aa). Residues 198–205, 259–263, and 313–316 each bind GTP; these read AHIDSGKS, DTPGH, and NKID. The segment at 639–683 is disordered; it reads GSGDGRADGSADGSADGSADGSGDSSAHGSSDRRGAGCARGSDDI. Residues 646–667 show a composition bias toward low complexity; that stretch reads DGSADGSADGSADGSGDSSAHG.

The protein belongs to the TRAFAC class translation factor GTPase superfamily. Classic translation factor GTPase family. LepA subfamily.

It localises to the mitochondrion inner membrane. The catalysed reaction is GTP + H2O = GDP + phosphate + H(+). Promotes mitochondrial protein synthesis. May act as a fidelity factor of the translation reaction, by catalyzing a one-codon backward translocation of tRNAs on improperly translocated ribosomes. Binds to mitochondrial ribosomes in a GTP-dependent manner. This Plasmodium vivax (strain Salvador I) protein is Translation factor GUF1 homolog, mitochondrial.